The chain runs to 617 residues: Dihydroxy-acid dehydratase (617 aa).

Asp-81 contributes to the Mg(2+) binding site. A [2Fe-2S] cluster-binding site is contributed by Cys-122. Residues Asp-123 and Lys-124 each contribute to the Mg(2+) site. Residue Lys-124 is modified to N6-carboxylysine. Cys-195 lines the [2Fe-2S] cluster pocket. Glu-491 contacts Mg(2+). Catalysis depends on Ser-517, which acts as the Proton acceptor.

The protein belongs to the IlvD/Edd family. Homodimer. The cofactor is [2Fe-2S] cluster. Mg(2+) serves as cofactor.

The enzyme catalyses (2R)-2,3-dihydroxy-3-methylbutanoate = 3-methyl-2-oxobutanoate + H2O. It catalyses the reaction (2R,3R)-2,3-dihydroxy-3-methylpentanoate = (S)-3-methyl-2-oxopentanoate + H2O. The protein operates within amino-acid biosynthesis; L-isoleucine biosynthesis; L-isoleucine from 2-oxobutanoate: step 3/4. It functions in the pathway amino-acid biosynthesis; L-valine biosynthesis; L-valine from pyruvate: step 3/4. Its function is as follows. Functions in the biosynthesis of branched-chain amino acids. Catalyzes the dehydration of (2R,3R)-2,3-dihydroxy-3-methylpentanoate (2,3-dihydroxy-3-methylvalerate) into 2-oxo-3-methylpentanoate (2-oxo-3-methylvalerate) and of (2R)-2,3-dihydroxy-3-methylbutanoate (2,3-dihydroxyisovalerate) into 2-oxo-3-methylbutanoate (2-oxoisovalerate), the penultimate precursor to L-isoleucine and L-valine, respectively. The chain is Dihydroxy-acid dehydratase from Buchnera aphidicola subsp. Acyrthosiphon pisum (strain 5A).